Here is a 336-residue protein sequence, read N- to C-terminus: HTH-type transcriptional repressor PurR (336 aa).

Positions 2-56 (ATIKDVAKMAGVSTTTVSHVINKTRFVAKDTEEAVLSAIKQLNYSPSAVARSLKV) constitute an HTH lacI-type domain. The segment at residues 4–23 (IKDVAKMAGVSTTTVSHVIN) is a DNA-binding region (H-T-H motif). The DNA-binding element occupies 48-56 (SAVARSLKV). Residues Y73, K188, T190, F219, and D273 each coordinate hypoxanthine.

Homodimer.

It participates in purine metabolism; purine nucleotide biosynthesis [regulation]. Its function is as follows. Is the main repressor of the genes involved in the de novo synthesis of purine nucleotides, regulating purB, purC, purEK, purF, purHD, purL, purMN and guaBA expression. PurR is allosterically activated to bind its cognate DNA by binding the purine corepressors, hypoxanthine or guanine, thereby effecting transcription repression. This is HTH-type transcriptional repressor PurR from Haemophilus influenzae (strain ATCC 51907 / DSM 11121 / KW20 / Rd).